A 363-amino-acid chain; its full sequence is Aminomethyltransferase (363 aa).

The protein belongs to the GcvT family. The glycine cleavage system is composed of four proteins: P, T, L and H.

The enzyme catalyses N(6)-[(R)-S(8)-aminomethyldihydrolipoyl]-L-lysyl-[protein] + (6S)-5,6,7,8-tetrahydrofolate = N(6)-[(R)-dihydrolipoyl]-L-lysyl-[protein] + (6R)-5,10-methylene-5,6,7,8-tetrahydrofolate + NH4(+). The glycine cleavage system catalyzes the degradation of glycine. The chain is Aminomethyltransferase from Thioalkalivibrio sulfidiphilus (strain HL-EbGR7).